Here is a 310-residue protein sequence, read N- to C-terminus: Isoflavone reductase homolog A622 (310 aa).

Residues 13–19 (GGTGYIG), R38, and K47 each bind NADP(+). The Proton acceptor role is filled by K135. Residue R139 coordinates NADP(+).

This sequence belongs to the NmrA-type oxidoreductase family. Isoflavone reductase subfamily. Monomer.

The protein localises to the cytoplasm. The protein operates within alkaloid biosynthesis; nicotine biosynthesis. Its function is as follows. NADPH-binding protein. Involved in the biosynthesis of pyridine alkaloid natural products, leading mainly to the production of anabasine, anatabine, nicotine and nornicotine, effective deterrents against herbivores with antiparasitic and pesticide properties (neurotoxins); nornicotine serves as the precursor in the synthesis of the carcinogen compound N'-nitrosonornicotine (NNN). Reductase involved in a late step of tobacco alkaloid biosynthesis. Triggers either the formation of a nicotinic acid-derived precursor or the final condensation reaction of tobacco alkaloids. This Nicotiana glauca (Glaucous tobacco) protein is Isoflavone reductase homolog A622.